A 75-amino-acid chain; its full sequence is MADVLDQLNEREEALLQNILAPHLDTELSDDEVDAIAEAGRQCSECGLPIPTTRLRANPFAHRCVSCQQDWEEGR.

The segment at 43–67 (CSECGLPIPTTRLRANPFAHRCVSC) adopts a dksA C4-type zinc-finger fold.

This is an uncharacterized protein from Haemophilus influenzae (strain ATCC 51907 / DSM 11121 / KW20 / Rd).